A 380-amino-acid chain; its full sequence is Chorismate synthase (380 aa).

The NADP(+) site is built by R48 and R53. Residues 126–128, G284, 299–303, and R326 contribute to the FMN site; these read RAS and KPTSS.

The protein belongs to the chorismate synthase family. The cofactor is FMNH2.

The catalysed reaction is 5-O-(1-carboxyvinyl)-3-phosphoshikimate = chorismate + phosphate. It functions in the pathway metabolic intermediate biosynthesis; chorismate biosynthesis; chorismate from D-erythrose 4-phosphate and phosphoenolpyruvate: step 7/7. In terms of biological role, catalyzes the anti-1,4-elimination of the C-3 phosphate and the C-6 proR hydrogen from 5-enolpyruvylshikimate-3-phosphate (EPSP) to yield chorismate, which is the branch point compound that serves as the starting substrate for the three terminal pathways of aromatic amino acid biosynthesis. This reaction introduces a second double bond into the aromatic ring system. This Ignicoccus hospitalis (strain KIN4/I / DSM 18386 / JCM 14125) protein is Chorismate synthase.